The sequence spans 1076 residues: Nuclear factor of activated T-cells, cytoplasmic 3 (1076 aa).

Threonine 2 carries the N-acetylthreonine modification. Residues 110 to 115 (PSIQIT) are calcineurin-binding. Positions 206-307 (LGSPLTSPGG…PGHSPRGSVT (102 aa)) are disordered. 2 consecutive repeat copies span residues 208–224 (SPLTSPGGSPGGCPGEE) and 237–253 (SPRQSPCHSPRSSITDE). The 3 X SP repeats stretch occupies residues 208–309 (SPLTSPGGSP…HSPRGSVTED (102 aa)). Residues 237–254 (SPRQSPCHSPRSSITDEN) show a composition bias toward polar residues. Positions 257–271 (SPRPASGPSSRPTSP) are enriched in low complexity. The Nuclear localization signal signature appears at 274-276 (KRR). Copy 3 of the repeat occupies 293 to 309 (SPVPSPGHSPRGSVTED). Serine 345 bears the Phosphoserine mark. The segment at 359–390 (CSDDQGSLSPSRETSVDDGLGSQYPLKKDSSG) is disordered. Positions 362 to 371 (DQGSLSPSRE) are enriched in polar residues. Serine 373 is modified (phosphoserine). The RHD domain maps to 416–597 (SSLPPLDWPL…IPVECSQRSA (182 aa)). A DNA-binding region spans residues 445–452 (RAHYETEG). The Nuclear localization signal signature appears at 687 to 689 (KRK). Disordered stretches follow at residues 700 to 744 (PVLM…ALSA) and 863 to 987 (GHLL…GGLS). The span at 713 to 722 (LSSVPSLPVP) shows a compositional bias: low complexity. Composition is skewed to polar residues over residues 724-734 (SAQTQRPSSDT) and 888-911 (SAGQRSLSSPVAAQVTGQPSSHLQ). Composition is skewed to low complexity over residues 917-939 (PSHPGSATAASPAASHALSSSPI) and 946-965 (QLQSMPYQSPSSGTASSPSP). The span at 970–981 (HSGQHSTQAQST) shows a compositional bias: polar residues. The Nuclear export signal motif lies at 1032–1041 (TLDDVNEIIG). The segment at 1049 to 1076 (VSQGPEVIRDAPLPGPESPDVMSSNSAQ) is disordered. Serine 1066 carries the post-translational modification Phosphoserine.

In terms of assembly, NFATC proteins bind to DNA as monomers. Member of the multicomponent NFATC transcription complex that consists of at least two components, a pre-existing cytoplasmic component NFATC2 and an inducible nuclear component NFATC1. Other members such as NFATC4, or members of the activating protein-1 family, MAF, GATA4 and Cbp/p300 can also bind the complex. Component of a promoter-binding complex composed of STAT3, NFATC3 and NFATC4; complex formation is enhanced by calcineurin. Interacts with TRIM17; this interaction prevents NFATC3 nuclear localization. Interacts with and ubiquitinated by STUB1/CHIP; HSPA1A/HSP70 is required as a co-chaperone. Phosphorylated by NFATC-kinase; dephosphorylated by calcineurin. Post-translationally, ubiquitinated by STUB1/CHIP, leading to proteasomal degradation. In terms of tissue distribution, expressed in cardiomyocytes (at protein level).

Its subcellular location is the cytoplasm. It is found in the nucleus. In terms of biological role, acts as a regulator of transcriptional activation. Binds to the TNFSF11/RANKL promoter region and promotes TNFSF11 transcription. Binding to the TNFSF11 promoter region is increased by high levels of Ca(2+) which induce NFATC3 expression and may lead to regulation of TNFSF11 expression in osteoblasts. Plays a role in promoting mesenteric arterial wall remodeling in response to the intermittent hypoxia-induced increase in EDN1 and ROCK signaling. As a result NFATC3 colocalizes with F-actin filaments, translocates to the nucleus and promotes transcription of the smooth muscle hypertrophy and differentiation marker ACTA2. Promotes lipopolysaccharide-induced apoptosis and hypertrophy in cardiomyocytes. Following JAK/STAT signaling activation and as part of a complex with NFATC4 and STAT3, binds to the alpha-beta E4 promoter region of CRYAB and activates transcription in cardiomyocytes. In conjunction with NFATC4, involved in embryonic heart development via maintenance of cardiomyocyte survival, proliferation and differentiation. Plays a role in the inducible expression of cytokine genes in T-cells, especially in the induction of the IL-2. Required for thymocyte maturation during DN3 to DN4 transition and during positive selection. Positively regulates macrophage-derived polymicrobial clearance, via binding to the promoter region and promoting transcription of NOS2 resulting in subsequent generation of nitric oxide. Involved in Ca(2+)-mediated transcriptional responses upon Ca(2+) influx via ORAI1 CRAC channels. The sequence is that of Nuclear factor of activated T-cells, cytoplasmic 3 from Rattus norvegicus (Rat).